A 192-amino-acid chain; its full sequence is Probable GTP-binding protein EngB (192 aa).

Residues 22 to 192 (GRPEIVFVGR…LLASIDTFTQ (171 aa)) form the EngB-type G domain. Residues 30–37 (GRSNVGKS), 57–61 (GKTRL), 75–78 (DLPG), 142–145 (TKWD), and 172–174 (YSS) contribute to the GTP site. Mg(2+)-binding residues include S37 and T59.

This sequence belongs to the TRAFAC class TrmE-Era-EngA-EngB-Septin-like GTPase superfamily. EngB GTPase family. Mg(2+) serves as cofactor.

In terms of biological role, necessary for normal cell division and for the maintenance of normal septation. The protein is Probable GTP-binding protein EngB of Chlorobaculum tepidum (strain ATCC 49652 / DSM 12025 / NBRC 103806 / TLS) (Chlorobium tepidum).